Consider the following 365-residue polypeptide: Putative F-box/kelch-repeat protein At4g39290 (365 aa).

The F-box domain occupies Q10–F58. 2 Kelch repeats span residues D118–N165 and K167–G213.

The polypeptide is Putative F-box/kelch-repeat protein At4g39290 (Arabidopsis thaliana (Mouse-ear cress)).